We begin with the raw amino-acid sequence, 475 residues long: Glutamate--tRNA ligase (475 aa).

Positions 9-19 (PSPTGYLHVGG) match the 'HIGH' region motif. Positions 240 to 244 (KLSKR) match the 'KMSKS' region motif. Lys-243 lines the ATP pocket.

Belongs to the class-I aminoacyl-tRNA synthetase family. Glutamate--tRNA ligase type 1 subfamily. As to quaternary structure, monomer.

The protein localises to the cytoplasm. It catalyses the reaction tRNA(Glu) + L-glutamate + ATP = L-glutamyl-tRNA(Glu) + AMP + diphosphate. Its function is as follows. Catalyzes the attachment of glutamate to tRNA(Glu) in a two-step reaction: glutamate is first activated by ATP to form Glu-AMP and then transferred to the acceptor end of tRNA(Glu). The polypeptide is Glutamate--tRNA ligase (Vibrio campbellii (strain ATCC BAA-1116)).